Consider the following 804-residue polypeptide: Leucine--tRNA ligase (804 aa).

Positions 39-50 match the 'HIGH' region motif; it reads PFPSGKGLHVGH. A 'KMSKS' region motif is present at residues 573-577; it reads KMSKS. Lysine 576 provides a ligand contact to ATP.

The protein belongs to the class-I aminoacyl-tRNA synthetase family.

The protein resides in the cytoplasm. The enzyme catalyses tRNA(Leu) + L-leucine + ATP = L-leucyl-tRNA(Leu) + AMP + diphosphate. In Lactobacillus helveticus (strain DPC 4571), this protein is Leucine--tRNA ligase.